Consider the following 77-residue polypeptide: Sec-independent protein translocase protein TatA (77 aa).

A helical transmembrane segment spans residues 1 to 21 (MGSFSIWHWLVVLAIVVLVFG). The interval 40–77 (KEGMKGAEEENTQPPPSHQQVTGHSIKSEIEEKDQTKV) is disordered. Basic and acidic residues predominate over residues 65–77 (IKSEIEEKDQTKV).

The protein belongs to the TatA/E family. In terms of assembly, the Tat system comprises two distinct complexes: a TatABC complex, containing multiple copies of TatA, TatB and TatC subunits, and a separate TatA complex, containing only TatA subunits. Substrates initially bind to the TatABC complex, which probably triggers association of the separate TatA complex to form the active translocon.

Its subcellular location is the cell inner membrane. Functionally, part of the twin-arginine translocation (Tat) system that transports large folded proteins containing a characteristic twin-arginine motif in their signal peptide across membranes. TatA could form the protein-conducting channel of the Tat system. This chain is Sec-independent protein translocase protein TatA, found in Nitrosomonas eutropha (strain DSM 101675 / C91 / Nm57).